The primary structure comprises 244 residues: Probable transcriptional regulatory protein MMOB1910 (244 aa).

It belongs to the TACO1 family.

It localises to the cytoplasm. The polypeptide is Probable transcriptional regulatory protein MMOB1910 (Mycoplasma mobile (strain ATCC 43663 / 163K / NCTC 11711) (Mesomycoplasma mobile)).